Here is a 210-residue protein sequence, read N- to C-terminus: Na(+)-translocating NADH-quinone reductase subunit D (210 aa).

5 helical membrane passes run 42 to 62, 72 to 92, 103 to 123, 131 to 151, and 178 to 198; these read FVMTLAVTFVTALSNFFVSLI, IIVQMAIIASLVIVVDQILKA, VFVGLIITNCIVMGRAEAFAM, LIDGIGNGLGYGFVLITVGFF, and NGLMLLAPSAFFLIGFMIWAI.

This sequence belongs to the NqrDE/RnfAE family. As to quaternary structure, composed of six subunits; NqrA, NqrB, NqrC, NqrD, NqrE and NqrF.

The protein resides in the cell inner membrane. It carries out the reaction a ubiquinone + n Na(+)(in) + NADH + H(+) = a ubiquinol + n Na(+)(out) + NAD(+). Its function is as follows. NQR complex catalyzes the reduction of ubiquinone-1 to ubiquinol by two successive reactions, coupled with the transport of Na(+) ions from the cytoplasm to the periplasm. NqrA to NqrE are probably involved in the second step, the conversion of ubisemiquinone to ubiquinol. This chain is Na(+)-translocating NADH-quinone reductase subunit D, found in Vibrio vulnificus (strain CMCP6).